The following is a 293-amino-acid chain: Homoserine kinase (293 aa).

80–90 provides a ligand contact to ATP; it reads RPASGLGSSAA.

The protein belongs to the GHMP kinase family. Homoserine kinase subfamily.

Its subcellular location is the cytoplasm. The catalysed reaction is L-homoserine + ATP = O-phospho-L-homoserine + ADP + H(+). Its pathway is amino-acid biosynthesis; L-threonine biosynthesis; L-threonine from L-aspartate: step 4/5. Catalyzes the ATP-dependent phosphorylation of L-homoserine to L-homoserine phosphate. The sequence is that of Homoserine kinase from Halorubrum lacusprofundi (strain ATCC 49239 / DSM 5036 / JCM 8891 / ACAM 34).